The chain runs to 364 residues: DNA primase large subunit PriL (364 aa).

4 residues coordinate [4Fe-4S] cluster: Cys-237, Cys-309, Cys-318, and Cys-325. A disordered region spans residues Met-345–Gln-364.

Belongs to the eukaryotic-type primase large subunit family. As to quaternary structure, heterodimer of a small subunit (PriS) and a large subunit (PriL). [4Fe-4S] cluster is required as a cofactor.

Its function is as follows. Regulatory subunit of DNA primase, an RNA polymerase that catalyzes the synthesis of short RNA molecules used as primers for DNA polymerase during DNA replication. Stabilizes and modulates the activity of the small subunit, increasing the rate of DNA synthesis, and conferring RNA synthesis capability. The DNA polymerase activity may enable DNA primase to also catalyze primer extension after primer synthesis. May also play a role in DNA repair. In Methanococcoides burtonii (strain DSM 6242 / NBRC 107633 / OCM 468 / ACE-M), this protein is DNA primase large subunit PriL.